Here is a 380-residue protein sequence, read N- to C-terminus: uncharacterized protein (380 aa).

Disordered regions lie at residues 278 to 323 (AATI…PRVA) and 345 to 368 (SLPG…RPRR). The span at 301-319 (RNGPRRPARRGTSRGRRCA) shows a compositional bias: basic residues.

This is an uncharacterized protein from Mycobacterium tuberculosis (strain CDC 1551 / Oshkosh).